The following is a 297-amino-acid chain: ClpXP adapter protein SpxH (297 aa).

This sequence belongs to the SpxH family. As to quaternary structure, interacts with Spx.

The protein resides in the cytoplasm. Its function is as follows. Adapter protein required for efficient degradation of Spx by ClpXP under non-stress conditions. Interaction with Spx stabilizes Spx and exposes the C-terminus of Spx for recognition and proteolysis by ClpXP. In Bacillus thuringiensis subsp. konkukian (strain 97-27), this protein is ClpXP adapter protein SpxH.